The sequence spans 161 residues: Allophycocyanin beta chain (161 aa).

N4-methylasparagine is present on N71. Residue C81 coordinates (2R,3E)-phycocyanobilin.

The protein belongs to the phycobiliprotein family. Heterodimer of an alpha and a beta chain. Contains one covalently linked phycocyanobilin chromophore.

The protein localises to the plastid. It localises to the cyanelle thylakoid membrane. Its function is as follows. Light-harvesting photosynthetic bile pigment-protein from the phycobiliprotein complex. Allophycocyanin has a maximum absorption at approximately 650 nanometers. The polypeptide is Allophycocyanin beta chain (apcB) (Cyanophora paradoxa).